Here is a 300-residue protein sequence, read N- to C-terminus: Free fatty acid receptor 1 (300 aa).

The Extracellular segment spans residues 1–8; that stretch reads MALSPQLF. A helical membrane pass occupies residues 9–31; that stretch reads FALYVSAFALGFPLNLLAIRGAV. At 32–41 the chain is on the cytoplasmic side; that stretch reads ARARLRLTPN. The chain crosses the membrane as a helical span at residues 42–64; the sequence is LVYTLHLACSDLLLAITLPVKAV. The Extracellular portion of the chain corresponds to 65–79; it reads EALASGAWPLPLPLC. Cys-79 and Cys-170 are joined by a disulfide. A helical membrane pass occupies residues 80–101; that stretch reads PVFVLVHFAPLYAGGGFLAALS. The Cytoplasmic segment spans residues 102 to 121; sequence AGRYLGAAFPFGYQAVRRPR. The chain crosses the membrane as a helical span at residues 122 to 142; the sequence is YSWGVCVAIWALVLCHMGLVL. Over 143–178 the chain is Extracellular; that stretch reads GLEAPGGWLNTTSSSLGINTPVNGSPVCLEAWDPNS. A glycan (N-linked (GlcNAc...) asparagine) is linked at Asn-152. The helical transmembrane segment at 179-200 threads the bilayer; it reads ARPARLSFSILLFFVPLVITAF. Over 201–223 the chain is Cytoplasmic; it reads CYVGCLRALAHSGLSHKRKLRAA. Residues 224 to 248 form a helical membrane-spanning segment; sequence WAAGGAFLTLLLCLGPYNASNVASF. The Extracellular segment spans residues 249–256; the sequence is VNPDLGGS. A helical membrane pass occupies residues 257–279; that stretch reads WRKLGLITGSWSVVLNPLVTGYL. Residues 280-300 are Cytoplasmic-facing; the sequence is GASPGRGTVCTTRTQGGTIQK.

This sequence belongs to the G-protein coupled receptor 1 family.

Its subcellular location is the cell membrane. Functionally, G-protein coupled receptor for medium and long chain saturated and unsaturated fatty acids that plays an important role in glucose homeostasis. Fatty acid binding increases glucose-stimulated insulin secretion, and may also enhance the secretion of glucagon-like peptide 1 (GLP-1). May also play a role in bone homeostasis; receptor signaling activates pathways that inhibit osteoclast differentiation. Ligand binding leads to a conformation change that triggers signaling via G-proteins that activate phospholipase C, leading to an increase of the intracellular calcium concentration. Seems to act through a G(q) and G(i)-mediated pathway. Mediates the anti-inflammatory effects of omega-3 polyunsaturated fatty acids (PUFAs) via inhibition of NLRP3 inflammasome activation. The sequence is that of Free fatty acid receptor 1 (FFAR1) from Mesocricetus auratus (Golden hamster).